The primary structure comprises 311 residues: Serpentine receptor class gamma-6 (311 aa).

7 helical membrane-spanning segments follow: residues Met-24 to Ile-44, Phe-58 to Phe-78, Pro-101 to Ala-121, Leu-148 to Ile-168, Tyr-200 to Trp-220, Ile-235 to Met-255, and Ile-266 to Ile-286.

Belongs to the nematode receptor-like protein srg family.

The protein localises to the membrane. The chain is Serpentine receptor class gamma-6 (srg-6) from Caenorhabditis elegans.